Here is a 319-residue protein sequence, read N- to C-terminus: Thioredoxin reductase (319 aa).

36 to 43 (TGINKGGQ) contacts FAD. An intrachain disulfide couples Cys-136 to Cys-139. Position 288–297 (288–297 (DVIDHVYRQA)) interacts with FAD.

The protein belongs to the class-II pyridine nucleotide-disulfide oxidoreductase family. In terms of assembly, homodimer. FAD serves as cofactor.

It is found in the cytoplasm. The catalysed reaction is [thioredoxin]-dithiol + NADP(+) = [thioredoxin]-disulfide + NADPH + H(+). The polypeptide is Thioredoxin reductase (trxB) (Buchnera aphidicola subsp. Schizaphis graminum (strain Sg)).